The chain runs to 214 residues: Response regulator GacA (214 aa).

The Response regulatory domain occupies 3 to 119 (KVLVVDDHDL…EMVQAIRLVF (117 aa)). Residue Asp-54 is modified to 4-aspartylphosphate. An HTH luxR-type domain is found at 143 to 208 (NNSPFDLLSE…ELALLAVRHG (66 aa)). The H-T-H motif DNA-binding region spans 167–186 (VQTISDKLCLSPKTVNTYRY).

Post-translationally, phosphorylated by LemA.

Functionally, forms part of a two-component regulatory system GacA/GacA(LemA). May be involved in lesion formation, swarming and in the production of extracellular protease, syringomycin and N-acyl-L-homoserine lactone (acyl-HSL). The sequence is that of Response regulator GacA (gacA) from Pseudomonas syringae pv. syringae (strain B728a).